The sequence spans 153 residues: Aspartate carbamoyltransferase regulatory chain (153 aa).

Positions 109, 114, 138, and 141 each coordinate Zn(2+).

It belongs to the PyrI family. As to quaternary structure, contains catalytic and regulatory chains. Zn(2+) serves as cofactor.

In terms of biological role, involved in allosteric regulation of aspartate carbamoyltransferase. The protein is Aspartate carbamoyltransferase regulatory chain of Klebsiella pneumoniae subsp. pneumoniae (strain ATCC 700721 / MGH 78578).